A 278-amino-acid chain; its full sequence is tRNA(Phe) (4-demethylwyosine(37)-C(7)) aminocarboxypropyltransferase (278 aa).

Residues S109, R116, E155, and 183 to 184 (DN) contribute to the S-adenosyl-L-methionine site.

Belongs to the class I-like SAM-binding methyltransferase superfamily. TRM5/TYW2 family.

The protein localises to the cytoplasm. It carries out the reaction 4-demethylwyosine(37) in tRNA(Phe) + S-adenosyl-L-methionine = 4-demethyl-7-[(3S)-3-amino-3-carboxypropyl]wyosine(37) in tRNA(Phe) + S-methyl-5'-thioadenosine + H(+). Functionally, S-adenosyl-L-methionine-dependent transferase that acts as a component of the wyosine derivatives biosynthesis pathway. Catalyzes the transfer of the alpha-amino-alpha-carboxypropyl (acp) group from S-adenosyl-L-methionine to 4-demethylwyosine (imG-14), forming 7-aminocarboxypropyl-demethylwyosine (wybutosine-86) at position 37 of tRNA(Phe). This is tRNA(Phe) (4-demethylwyosine(37)-C(7)) aminocarboxypropyltransferase from Pyrococcus horikoshii (strain ATCC 700860 / DSM 12428 / JCM 9974 / NBRC 100139 / OT-3).